The sequence spans 469 residues: Ribulose bisphosphate carboxylase large chain (469 aa).

Residue Lys-5 is modified to N6,N6,N6-trimethyllysine. Positions 114 and 164 each coordinate substrate. Lys-166 functions as the Proton acceptor in the catalytic mechanism. Residue Lys-168 coordinates substrate. Residues Lys-192, Asp-194, and Glu-195 each contribute to the Mg(2+) site. Lys-192 carries the N6-carboxylysine modification. The active-site Proton acceptor is His-285. Residues Arg-286, His-318, and Ser-370 each coordinate substrate.

It belongs to the RuBisCO large chain family. Type I subfamily. In terms of assembly, heterohexadecamer of 8 large chains and 8 small chains; disulfide-linked. The disulfide link is formed within the large subunit homodimers. It depends on Mg(2+) as a cofactor. The disulfide bond which can form in the large chain dimeric partners within the hexadecamer appears to be associated with oxidative stress and protein turnover.

The protein localises to the plastid. Its subcellular location is the chloroplast. The enzyme catalyses 2 (2R)-3-phosphoglycerate + 2 H(+) = D-ribulose 1,5-bisphosphate + CO2 + H2O. It carries out the reaction D-ribulose 1,5-bisphosphate + O2 = 2-phosphoglycolate + (2R)-3-phosphoglycerate + 2 H(+). Its function is as follows. RuBisCO catalyzes two reactions: the carboxylation of D-ribulose 1,5-bisphosphate, the primary event in carbon dioxide fixation, as well as the oxidative fragmentation of the pentose substrate in the photorespiration process. Both reactions occur simultaneously and in competition at the same active site. The protein is Ribulose bisphosphate carboxylase large chain of Calycophyllum candidissimum (Degame lemonwood tree).